Reading from the N-terminus, the 261-residue chain is Cytochrome c oxidase subunit 3 (261 aa).

Topologically, residues 1–15 (MAHQAHAYHMVDPSP) are mitochondrial matrix. Residues 16–34 (WPLTGAIGALFLTSGLAIW) form a helical membrane-spanning segment. Residues 35–40 (FHFQSV) are Mitochondrial intermembrane-facing. The helical transmembrane segment at 41–66 (TLLTLGLILLLLTMYQWWRDIIREGT) threads the bilayer. Over 67–72 (FQGHHT) the chain is Mitochondrial matrix. The chain crosses the membrane as a helical span at residues 73-105 (PPVQKGLRYGMILFITSEVFFFLGFFWAFYHSS). Topologically, residues 106–128 (LAPTPELGGCWPPTGITPLDPFE) are mitochondrial intermembrane. The helical transmembrane segment at 129-152 (VPLLNTAVLLASGVTVTWAHHSLM) threads the bilayer. Over 153-155 (EGA) the chain is Mitochondrial matrix. The helical transmembrane segment at 156–183 (RKQAIQALALTIILGVYFTALQAMEYYE) threads the bilayer. The Mitochondrial intermembrane portion of the chain corresponds to 184-190 (APFTIAD). The chain crosses the membrane as a helical span at residues 191-223 (GVYGSTFFVATGFHGLHVIIGSSFLAVCLLRQI). Residues 224 to 232 (QYHFTSEHH) lie on the Mitochondrial matrix side of the membrane. A helical transmembrane segment spans residues 233–256 (FGFEAAAWYWHFVDVVWLFLYVSI). Residues 257–261 (YWWGS) are Mitochondrial intermembrane-facing.

It belongs to the cytochrome c oxidase subunit 3 family. Component of the cytochrome c oxidase (complex IV, CIV), a multisubunit enzyme composed of 14 subunits. The complex is composed of a catalytic core of 3 subunits MT-CO1, MT-CO2 and MT-CO3, encoded in the mitochondrial DNA, and 11 supernumerary subunits COX4I, COX5A, COX5B, COX6A, COX6B, COX6C, COX7A, COX7B, COX7C, COX8 and NDUFA4, which are encoded in the nuclear genome. The complex exists as a monomer or a dimer and forms supercomplexes (SCs) in the inner mitochondrial membrane with NADH-ubiquinone oxidoreductase (complex I, CI) and ubiquinol-cytochrome c oxidoreductase (cytochrome b-c1 complex, complex III, CIII), resulting in different assemblies (supercomplex SCI(1)III(2)IV(1) and megacomplex MCI(2)III(2)IV(2)).

It localises to the mitochondrion inner membrane. The enzyme catalyses 4 Fe(II)-[cytochrome c] + O2 + 8 H(+)(in) = 4 Fe(III)-[cytochrome c] + 2 H2O + 4 H(+)(out). In terms of biological role, component of the cytochrome c oxidase, the last enzyme in the mitochondrial electron transport chain which drives oxidative phosphorylation. The respiratory chain contains 3 multisubunit complexes succinate dehydrogenase (complex II, CII), ubiquinol-cytochrome c oxidoreductase (cytochrome b-c1 complex, complex III, CIII) and cytochrome c oxidase (complex IV, CIV), that cooperate to transfer electrons derived from NADH and succinate to molecular oxygen, creating an electrochemical gradient over the inner membrane that drives transmembrane transport and the ATP synthase. Cytochrome c oxidase is the component of the respiratory chain that catalyzes the reduction of oxygen to water. Electrons originating from reduced cytochrome c in the intermembrane space (IMS) are transferred via the dinuclear copper A center (CU(A)) of subunit 2 and heme A of subunit 1 to the active site in subunit 1, a binuclear center (BNC) formed by heme A3 and copper B (CU(B)). The BNC reduces molecular oxygen to 2 water molecules using 4 electrons from cytochrome c in the IMS and 4 protons from the mitochondrial matrix. This chain is Cytochrome c oxidase subunit 3 (mt-co3), found in Formosania lacustris (Oriental stream loach).